A 560-amino-acid polypeptide reads, in one-letter code: Proline--tRNA ligase (560 aa).

Belongs to the class-II aminoacyl-tRNA synthetase family. ProS type 1 subfamily. As to quaternary structure, homodimer.

The protein resides in the cytoplasm. It carries out the reaction tRNA(Pro) + L-proline + ATP = L-prolyl-tRNA(Pro) + AMP + diphosphate. Catalyzes the attachment of proline to tRNA(Pro) in a two-step reaction: proline is first activated by ATP to form Pro-AMP and then transferred to the acceptor end of tRNA(Pro). As ProRS can inadvertently accommodate and process non-cognate amino acids such as alanine and cysteine, to avoid such errors it has two additional distinct editing activities against alanine. One activity is designated as 'pretransfer' editing and involves the tRNA(Pro)-independent hydrolysis of activated Ala-AMP. The other activity is designated 'posttransfer' editing and involves deacylation of mischarged Ala-tRNA(Pro). The misacylated Cys-tRNA(Pro) is not edited by ProRS. In Vesicomyosocius okutanii subsp. Calyptogena okutanii (strain HA), this protein is Proline--tRNA ligase.